Consider the following 513-residue polypeptide: MQLNSTEISELIKQRIAQFNVVSEAHNEGTIVSVSDGIIRVHGLADVMQGEMIALPGNRYAIALNLERDSVGAVVMGPYADLAEGMKVKCTGRILEVPVGRGLLGRVVNTLGEPIDGKGSIENDGFSAVEAIAPGVIERQSVDEPVQTGYKSVDAMIPIGRGQRELIIGDRQTGKTALAIDAIINQRDSGIKCVYVAIGQKASTVANVVRKLEEHDALANTIVVVATASESAALQYLAPYSGCAMGEYFRDRGEDALIIYDDLSKQAVAYRQISLLLRRPPGREAYPGDVFYLHSRLLERAARVNAEYVEAFTKGEVKGKTGSLTALPIIETQAGDVSAFVPTNVISITDGQIFLESSLFNAGIRPAVNPGISVSRVGGAAQTKIMKKLSGGIRTALAQYRELAAFSQFASDLDDATRKQLSHGQKVTELLKQKQYAPMSVAQQSLVLFAAERGYLGDVELAKVGSFEAALLAFADREHAELLQQINQTGAYNDEIEAKLKGILDTFKATQSW.

169–176 provides a ligand contact to ATP; sequence GDRQTGKT.

The protein belongs to the ATPase alpha/beta chains family. In terms of assembly, F-type ATPases have 2 components, CF(1) - the catalytic core - and CF(0) - the membrane proton channel. CF(1) has five subunits: alpha(3), beta(3), gamma(1), delta(1), epsilon(1). CF(0) has three main subunits: a(1), b(2) and c(9-12). The alpha and beta chains form an alternating ring which encloses part of the gamma chain. CF(1) is attached to CF(0) by a central stalk formed by the gamma and epsilon chains, while a peripheral stalk is formed by the delta and b chains.

The protein localises to the cell inner membrane. It carries out the reaction ATP + H2O + 4 H(+)(in) = ADP + phosphate + 5 H(+)(out). Produces ATP from ADP in the presence of a proton gradient across the membrane. The alpha chain is a regulatory subunit. The protein is ATP synthase subunit alpha of Yersinia pseudotuberculosis serotype O:1b (strain IP 31758).